Consider the following 428-residue polypeptide: Trigger factor (428 aa).

The PPIase FKBP-type domain maps to 163-248 (KDIVTIDFEG…VKEIKAKELP (86 aa)).

The protein belongs to the FKBP-type PPIase family. Tig subfamily.

The protein localises to the cytoplasm. It carries out the reaction [protein]-peptidylproline (omega=180) = [protein]-peptidylproline (omega=0). Its function is as follows. Involved in protein export. Acts as a chaperone by maintaining the newly synthesized protein in an open conformation. Functions as a peptidyl-prolyl cis-trans isomerase. In Lachnoclostridium phytofermentans (strain ATCC 700394 / DSM 18823 / ISDg) (Clostridium phytofermentans), this protein is Trigger factor.